The primary structure comprises 431 residues: WD repeat-containing protein 18 (431 aa).

WD repeat units follow at residues 78–118, 119–158, 170–211, 213–252, and 267–306; these read VCPG…AILS, RHFQ…QLDS, RHSL…MLLS, LFDV…LSRD, and GHRN…CIWT. The tract at residues 342–363 is disordered; the sequence is HLNPSEQGDGTGTGGMSLRLGA.

This sequence belongs to the WD repeat IPI3/WDR18 family. Component of the PELP1 complex, composed of at least PELP1, TEX10 and WDR18. The complex interacts with pre-60S ribosome particles.

It is found in the nucleus. Its subcellular location is the nucleolus. The protein resides in the nucleoplasm. It localises to the dynein axonemal particle. Functionally, involved in left-right determination through controlling the correct clustering and migration of dorsal forerunner cells (DFCs) and Kupffer's vesicle formation. Component of the PELP1 complex involved in the nucleolar steps of 28S rRNA maturation and the subsequent nucleoplasmic transit of the pre-60S ribosomal subunit. This is WD repeat-containing protein 18 (wdr18) from Danio rerio (Zebrafish).